We begin with the raw amino-acid sequence, 170 residues long: Nucleoside-triphosphatase THEP1 (170 aa).

Residues 7–14 (GMPGVGKT) and 98–105 (IIIIDELG) contribute to the ATP site.

Belongs to the THEP1 NTPase family.

The catalysed reaction is a ribonucleoside 5'-triphosphate + H2O = a ribonucleoside 5'-diphosphate + phosphate + H(+). In terms of biological role, has nucleotide phosphatase activity towards ATP, GTP, CTP, TTP and UTP. May hydrolyze nucleoside diphosphates with lower efficiency. This is Nucleoside-triphosphatase THEP1 from Methanocaldococcus jannaschii (strain ATCC 43067 / DSM 2661 / JAL-1 / JCM 10045 / NBRC 100440) (Methanococcus jannaschii).